A 155-amino-acid polypeptide reads, in one-letter code: Small ribosomal subunit protein uS9 (155 aa).

Belongs to the universal ribosomal protein uS9 family.

This chain is Small ribosomal subunit protein uS9, found in Rhizobium etli (strain CIAT 652).